A 561-amino-acid polypeptide reads, in one-letter code: Putative pectinesterase/pectinesterase inhibitor 24 (561 aa).

Residues 26 to 46 traverse the membrane as a helical segment; sequence IAIIAVSLVILAGIVIGAVFG. The tract at residues 64 to 211 is pectinesterase inhibitor 24; the sequence is DSISVSVKAV…TELTSNALAI (148 aa). Residues Asn-92, Asn-130, Asn-148, and Asn-200 are each glycosylated (N-linked (GlcNAc...) asparagine). The pectinesterase 24 stretch occupies residues 255–548; that stretch reads DIVVAKDGSG…TVKPFIDGGR (294 aa). Thr-330 and Gln-360 together coordinate substrate. Asp-383 (proton donor; for pectinesterase activity) is an active-site residue. A disulfide bridge connects residues Cys-397 and Cys-417. The active-site Nucleophile; for pectinesterase activity is the Asp-404. The substrate site is built by Arg-468 and Trp-470. Residue Asn-472 is glycosylated (N-linked (GlcNAc...) asparagine).

It in the N-terminal section; belongs to the PMEI family. In the C-terminal section; belongs to the pectinesterase family.

The protein localises to the membrane. The enzyme catalyses [(1-&gt;4)-alpha-D-galacturonosyl methyl ester](n) + n H2O = [(1-&gt;4)-alpha-D-galacturonosyl](n) + n methanol + n H(+). The protein operates within glycan metabolism; pectin degradation; 2-dehydro-3-deoxy-D-gluconate from pectin: step 1/5. In terms of biological role, acts in the modification of cell walls via demethylesterification of cell wall pectin. In Arabidopsis thaliana (Mouse-ear cress), this protein is Putative pectinesterase/pectinesterase inhibitor 24 (PME24).